The primary structure comprises 131 residues: Outer membrane protein assembly factor BamE (131 aa).

Positions 1–16 (MRNLLLVAAVALSTAG) are cleaved as a signal peptide. Cysteine 17 carries N-palmitoyl cysteine lipidation. The S-diacylglycerol cysteine moiety is linked to residue cysteine 17. Residues 112 to 131 (SAPKQFGRNLARDKKKQRGR) are disordered.

Belongs to the BamE family. In terms of assembly, part of the Bam complex.

The protein resides in the cell outer membrane. Functionally, part of the outer membrane protein assembly complex, which is involved in assembly and insertion of beta-barrel proteins into the outer membrane. The chain is Outer membrane protein assembly factor BamE from Xanthomonas campestris pv. campestris (strain ATCC 33913 / DSM 3586 / NCPPB 528 / LMG 568 / P 25).